The following is a 366-amino-acid chain: Cobalt-precorrin-5B C(1)-methyltransferase (366 aa).

The protein belongs to the CbiD family.

It carries out the reaction Co-precorrin-5B + S-adenosyl-L-methionine = Co-precorrin-6A + S-adenosyl-L-homocysteine. The protein operates within cofactor biosynthesis; adenosylcobalamin biosynthesis; cob(II)yrinate a,c-diamide from sirohydrochlorin (anaerobic route): step 6/10. Functionally, catalyzes the methylation of C-1 in cobalt-precorrin-5B to form cobalt-precorrin-6A. This chain is Cobalt-precorrin-5B C(1)-methyltransferase, found in Thermus thermophilus (strain ATCC BAA-163 / DSM 7039 / HB27).